Here is a 162-residue protein sequence, read N- to C-terminus: NADH-quinone oxidoreductase subunit C (162 aa).

It belongs to the complex I 30 kDa subunit family. NDH-1 is composed of 14 different subunits. Subunits NuoB, C, D, E, F, and G constitute the peripheral sector of the complex.

It is found in the cell inner membrane. The enzyme catalyses a quinone + NADH + 5 H(+)(in) = a quinol + NAD(+) + 4 H(+)(out). Its function is as follows. NDH-1 shuttles electrons from NADH, via FMN and iron-sulfur (Fe-S) centers, to quinones in the respiratory chain. The immediate electron acceptor for the enzyme in this species is believed to be ubiquinone. Couples the redox reaction to proton translocation (for every two electrons transferred, four hydrogen ions are translocated across the cytoplasmic membrane), and thus conserves the redox energy in a proton gradient. The polypeptide is NADH-quinone oxidoreductase subunit C (Geobacter metallireducens (strain ATCC 53774 / DSM 7210 / GS-15)).